We begin with the raw amino-acid sequence, 213 residues long: Protein GrpE (213 aa).

The segment at 1–61 is disordered; sequence MEQGEKQVME…AEKAPTAEEL (61 aa). Residues 13-35 are compositionally biased toward acidic residues; the sequence is TYDEPEREQPIEEEAAPQPEEES.

Belongs to the GrpE family. As to quaternary structure, homodimer.

The protein localises to the cytoplasm. Participates actively in the response to hyperosmotic and heat shock by preventing the aggregation of stress-denatured proteins, in association with DnaK and GrpE. It is the nucleotide exchange factor for DnaK and may function as a thermosensor. Unfolded proteins bind initially to DnaJ; upon interaction with the DnaJ-bound protein, DnaK hydrolyzes its bound ATP, resulting in the formation of a stable complex. GrpE releases ADP from DnaK; ATP binding to DnaK triggers the release of the substrate protein, thus completing the reaction cycle. Several rounds of ATP-dependent interactions between DnaJ, DnaK and GrpE are required for fully efficient folding. This is Protein GrpE from Geobacillus kaustophilus (strain HTA426).